A 425-amino-acid chain; its full sequence is Histidine--tRNA ligase (425 aa).

It belongs to the class-II aminoacyl-tRNA synthetase family. In terms of assembly, homodimer.

The protein localises to the cytoplasm. It catalyses the reaction tRNA(His) + L-histidine + ATP = L-histidyl-tRNA(His) + AMP + diphosphate + H(+). This is Histidine--tRNA ligase from Erwinia tasmaniensis (strain DSM 17950 / CFBP 7177 / CIP 109463 / NCPPB 4357 / Et1/99).